Consider the following 360-residue polypeptide: MLVWLAEHLVKYYSGFNVFSYLTFRAIVSLLTALFISLWMGPRMIAHLQKLSFGQVVRNDGPESHFSKRGTPTMGGIMILTAIVISVLLWAYPSNPYVWCVLVVLVGYGVIGFVDDYRKVVRKDTKGLIARWKYFWMSVIALGVAFALYLVGKDTPATQLVVPFFKDVMPQLGLFYILLAYFVIVGTGNAVNLTDGLDGLAIMPTVFVAGGFALVAWATGNMNFASYLHIPYLRHAGELVIVCTAIVGAGLGFLWFNTYPAQVFMGDVGSLALGGALGIIAVLLRQEFLLVIMGGVFVVETLSVILQVGSFKLRGQRIFRMAPIHHHYELKGWPEPRVIVRFWIISLMLVLIGLATLKVR.

The Periplasmic segment spans residues 1–25; that stretch reads MLVWLAEHLVKYYSGFNVFSYLTFR. Residues 26-46 traverse the membrane as a helical segment; sequence AIVSLLTALFISLWMGPRMIA. The Cytoplasmic segment spans residues 47-71; that stretch reads HLQKLSFGQVVRNDGPESHFSKRGT. Residues 72-92 traverse the membrane as a helical segment; it reads PTMGGIMILTAIVISVLLWAY. Proline 93 is a topological domain (periplasmic). The helical transmembrane segment at 94–114 threads the bilayer; it reads SNPYVWCVLVVLVGYGVIGFV. Residues 115–131 lie on the Cytoplasmic side of the membrane; it reads DDYRKVVRKDTKGLIAR. The chain crosses the membrane as a helical span at residues 132–152; the sequence is WKYFWMSVIALGVAFALYLVG. Topologically, residues 153–167 are periplasmic; sequence KDTPATQLVVPFFKD. A helical transmembrane segment spans residues 168 to 188; it reads VMPQLGLFYILLAYFVIVGTG. The Cytoplasmic portion of the chain corresponds to 189–198; it reads NAVNLTDGLD. Residues 199–219 form a helical membrane-spanning segment; sequence GLAIMPTVFVAGGFALVAWAT. Residues 220 to 235 are Periplasmic-facing; the sequence is GNMNFASYLHIPYLRH. The chain crosses the membrane as a helical span at residues 236–256; it reads AGELVIVCTAIVGAGLGFLWF. The Cytoplasmic segment spans residues 257 to 262; it reads NTYPAQ. A helical transmembrane segment spans residues 263–283; it reads VFMGDVGSLALGGALGIIAVL. At 284-287 the chain is on the periplasmic side; it reads LRQE. The chain crosses the membrane as a helical span at residues 288-308; sequence FLLVIMGGVFVVETLSVILQV. Residues 309-337 lie on the Cytoplasmic side of the membrane; sequence GSFKLRGQRIFRMAPIHHHYELKGWPEPR. A helical membrane pass occupies residues 338 to 358; it reads VIVRFWIISLMLVLIGLATLK. The Periplasmic segment spans residues 359–360; it reads VR.

Belongs to the glycosyltransferase 4 family. MraY subfamily. Requires Mg(2+) as cofactor.

The protein resides in the cell inner membrane. The enzyme catalyses UDP-N-acetyl-alpha-D-muramoyl-L-alanyl-gamma-D-glutamyl-meso-2,6-diaminopimeloyl-D-alanyl-D-alanine + di-trans,octa-cis-undecaprenyl phosphate = di-trans,octa-cis-undecaprenyl diphospho-N-acetyl-alpha-D-muramoyl-L-alanyl-D-glutamyl-meso-2,6-diaminopimeloyl-D-alanyl-D-alanine + UMP. It participates in cell wall biogenesis; peptidoglycan biosynthesis. Its function is as follows. Catalyzes the initial step of the lipid cycle reactions in the biosynthesis of the cell wall peptidoglycan: transfers peptidoglycan precursor phospho-MurNAc-pentapeptide from UDP-MurNAc-pentapeptide onto the lipid carrier undecaprenyl phosphate, yielding undecaprenyl-pyrophosphoryl-MurNAc-pentapeptide, known as lipid I. This chain is Phospho-N-acetylmuramoyl-pentapeptide-transferase, found in Escherichia coli O157:H7.